A 192-amino-acid chain; its full sequence is Imidazoleglycerol-phosphate dehydratase (192 aa).

It belongs to the imidazoleglycerol-phosphate dehydratase family.

The protein localises to the cytoplasm. The enzyme catalyses D-erythro-1-(imidazol-4-yl)glycerol 3-phosphate = 3-(imidazol-4-yl)-2-oxopropyl phosphate + H2O. It functions in the pathway amino-acid biosynthesis; L-histidine biosynthesis; L-histidine from 5-phospho-alpha-D-ribose 1-diphosphate: step 6/9. This is Imidazoleglycerol-phosphate dehydratase from Staphylococcus aureus (strain MRSA252).